A 186-amino-acid polypeptide reads, in one-letter code: ATP-dependent protease subunit HslV (186 aa).

The active site involves Thr-14. The Na(+) site is built by Ala-168, Cys-171, and Thr-174.

This sequence belongs to the peptidase T1B family. HslV subfamily. A double ring-shaped homohexamer of HslV is capped on each side by a ring-shaped HslU homohexamer. The assembly of the HslU/HslV complex is dependent on binding of ATP.

It localises to the cytoplasm. The enzyme catalyses ATP-dependent cleavage of peptide bonds with broad specificity.. With respect to regulation, allosterically activated by HslU binding. In terms of biological role, protease subunit of a proteasome-like degradation complex believed to be a general protein degrading machinery. This is ATP-dependent protease subunit HslV from Bradyrhizobium diazoefficiens (strain JCM 10833 / BCRC 13528 / IAM 13628 / NBRC 14792 / USDA 110).